The following is a 352-amino-acid chain: C-C chemokine receptor type 5 (352 aa).

The Extracellular segment spans residues 1 to 30 (MDYQVSSPIYDIDYYTSEPCQKINVKQIAA). Y3 bears the Sulfotyrosine mark. Residues S6 and S7 are each glycosylated (O-linked (GalNAc...) serine). A sulfotyrosine mark is found at Y10, Y14, and Y15. Disulfide bonds link C20/C269 and C101/C178. Residues 31 to 58 (RLLPPLYSLVFIFGFVGNMLVILILINC) form a helical membrane-spanning segment. Residues 59-68 (KRLKSMTDIY) lie on the Cytoplasmic side of the membrane. A helical transmembrane segment spans residues 69 to 89 (LLNLAISDLFFLLTVPFWAHY). The Extracellular segment spans residues 90 to 102 (AAAQWDFGNTMCQ). The helical transmembrane segment at 103–124 (LLTGLYFIGFFSGIFFIILLTI) threads the bilayer. Topologically, residues 125–141 (DRYLAIVHAVFALKART) are cytoplasmic. A helical membrane pass occupies residues 142-166 (VTFGVVTSVITWVVAVFASLPGIIF). The Extracellular segment spans residues 167–198 (TRSQKEGLHYTCSSHFPYSQYQFWKNFQTLKI). The helical transmembrane segment at 199–218 (VILGLVLPLLVMVICYSGIL) threads the bilayer. Residues 219-235 (KTLLRCRNEKKRHRAVR) lie on the Cytoplasmic side of the membrane. Residues 236-260 (LIFTIMIVYFLFWAPYNIVLLLNTF) traverse the membrane as a helical segment. The Extracellular portion of the chain corresponds to 261-277 (QEFFGLNNCSSSNRLDQ). A helical transmembrane segment spans residues 278–301 (AMQVTETLGMTHCCINPIIYAFVG). Residues 302–352 (EKFRNYLLVFFQKHIAKRFCKCCSIFQQEAPERASSVYTRSTGEQEISVGL) lie on the Cytoplasmic side of the membrane. Residues C321, C323, and C324 are each lipidated (S-palmitoyl cysteine). Phosphoserine; by BARK1 is present on residues S336, S337, S342, and S349.

Belongs to the G-protein coupled receptor 1 family. As to quaternary structure, interacts with PRAF2. Efficient ligand binding to CCL3/MIP-1alpha and CCL4/MIP-1beta requires sulfation, O-glycosylation and sialic acid modifications. Glycosylation on Ser-6 is required for efficient binding of CCL4. Interacts with GRK2. Interacts with ARRB1 and ARRB2. Interacts with CNIH4. Interacts with S100A4; this interaction stimulates T-lymphocyte chemotaxis. Post-translationally, sulfated on at least 2 of the N-terminal tyrosines. Sulfation is required for efficient binding of the chemokines, CCL3 and CCL4. Palmitoylation in the C-terminal is important for cell surface expression. In terms of processing, phosphorylation on serine residues in the C-terminal is stimulated by binding CC chemokines especially by APO-RANTES. Post-translationally, O-glycosylated, but not N-glycosylated. Ser-6 appears to be the major site even if Ser-7 may be also O-glycosylated. Also sialylated glycans present which contribute to chemokine binding. Thr-16 and Ser-17 may also be glycosylated and, if so, with small moieties such as a T-antigen.

It is found in the cell membrane. Receptor for a number of inflammatory CC-chemokines including CCL3/MIP-1-alpha, CCL4/MIP-1-beta and RANTES and subsequently transduces a signal by increasing the intracellular calcium ion level. May play a role in the control of granulocytic lineage proliferation or differentiation. Participates in T-lymphocyte migration to the infection site by acting as a chemotactic receptor. The polypeptide is C-C chemokine receptor type 5 (CCR5) (Pan paniscus (Pygmy chimpanzee)).